The primary structure comprises 584 residues: Arginine--tRNA ligase (584 aa).

Positions 125-135 match the 'HIGH' region motif; the sequence is PNIAKEMHVGH.

It belongs to the class-I aminoacyl-tRNA synthetase family. In terms of assembly, monomer.

It localises to the cytoplasm. The catalysed reaction is tRNA(Arg) + L-arginine + ATP = L-arginyl-tRNA(Arg) + AMP + diphosphate. In Thermosynechococcus vestitus (strain NIES-2133 / IAM M-273 / BP-1), this protein is Arginine--tRNA ligase.